The sequence spans 258 residues: Imidazole glycerol phosphate synthase subunit HisF (258 aa).

Active-site residues include Asp-11 and Asp-130.

Belongs to the HisA/HisF family. In terms of assembly, heterodimer of HisH and HisF.

The protein localises to the cytoplasm. It catalyses the reaction 5-[(5-phospho-1-deoxy-D-ribulos-1-ylimino)methylamino]-1-(5-phospho-beta-D-ribosyl)imidazole-4-carboxamide + L-glutamine = D-erythro-1-(imidazol-4-yl)glycerol 3-phosphate + 5-amino-1-(5-phospho-beta-D-ribosyl)imidazole-4-carboxamide + L-glutamate + H(+). Its pathway is amino-acid biosynthesis; L-histidine biosynthesis; L-histidine from 5-phospho-alpha-D-ribose 1-diphosphate: step 5/9. Functionally, IGPS catalyzes the conversion of PRFAR and glutamine to IGP, AICAR and glutamate. The HisF subunit catalyzes the cyclization activity that produces IGP and AICAR from PRFAR using the ammonia provided by the HisH subunit. The protein is Imidazole glycerol phosphate synthase subunit HisF of Synechococcus sp. (strain CC9902).